We begin with the raw amino-acid sequence, 585 residues long: Cyclic nucleotide-binding domain-containing protein 2 (585 aa).

Residue 116 to 239 coordinates a nucleoside 3',5'-cyclic phosphate; the sequence is SYRNYAEPLQ…DAQYRFEFFR (124 aa).

Its subcellular location is the cytoplasm. It is found in the cytosol. Its function is as follows. Essential for male fertility. Plays an important role in spermatogenesis and regulates sperm motility by controlling the development of the flagellar bending of sperm. This Macaca fascicularis (Crab-eating macaque) protein is Cyclic nucleotide-binding domain-containing protein 2 (CNBD2).